A 364-amino-acid chain; its full sequence is D-alanine--D-alanine ligase (364 aa).

Residues 134 to 347 form the ATP-grasp domain; sequence RRLACINGLK…YPDLLDELIN (214 aa). 167–222 is an ATP binding site; sequence ASEFGWPLFVKPCSLGSSVGIHKANNMDELNAAVADALRYDEEILVEEFIVGREIE. Residues aspartate 300, glutamate 314, and asparagine 316 each contribute to the Mg(2+) site.

The protein belongs to the D-alanine--D-alanine ligase family. Mg(2+) is required as a cofactor. The cofactor is Mn(2+).

It localises to the cytoplasm. It catalyses the reaction 2 D-alanine + ATP = D-alanyl-D-alanine + ADP + phosphate + H(+). It participates in cell wall biogenesis; peptidoglycan biosynthesis. In terms of biological role, cell wall formation. The sequence is that of D-alanine--D-alanine ligase from Legionella pneumophila (strain Paris).